The following is a 47-amino-acid chain: Large ribosomal subunit protein bL34 (47 aa).

The protein belongs to the bacterial ribosomal protein bL34 family.

The protein is Large ribosomal subunit protein bL34 of Corynebacterium glutamicum (strain R).